The sequence spans 422 residues: Protein FAM53B (422 aa).

Phosphoserine is present on residues serine 119, serine 168, serine 170, serine 180, serine 213, and serine 269. 2 disordered regions span residues 193 to 225 and 243 to 269; these read GQPCQGAPGSAPCGQAGDSWSPDPHPVGGGRLD and CPPSANSTPASTPELARRSSGLARSRS. Positions 244–269 are enriched in low complexity; the sequence is PPSANSTPASTPELARRSSGLARSRS. The Nuclear localization signal signature appears at 282-285; that stretch reads KRRR. Phosphoserine is present on residues serine 335 and serine 344.

It belongs to the FAM53 family. As to quaternary structure, interacts with CTNNB1.

The protein localises to the nucleus. Acts as a regulator of Wnt signaling pathway by regulating beta-catenin (CTNNB1) nuclear localization. The polypeptide is Protein FAM53B (Mus musculus (Mouse)).